The sequence spans 383 residues: Seipin (383 aa).

The Cytoplasmic segment spans residues 1-27; that stretch reads MVNDPPVPALLWAQEVGHVLAGRARRL. A helical transmembrane segment spans residues 28–48; it reads MLQFGVLFCTILLLLWVSVFL. The Lumenal segment spans residues 49-242; the sequence is YGSFYYSYMP…TCAFVGVASN (194 aa). 2 N-linked (GlcNAc...) asparagine glycosylation sites follow: Asn88 and Asn242. A helical membrane pass occupies residues 243-263; sequence FTFLSVIVLFSYMQWVWGAVW. Residues 264-383 lie on the Cytoplasmic side of the membrane; the sequence is PRHRFSLQVN…LRQRPTCSSS (120 aa). The interval 279–383 is disordered; the sequence is NSHHGAPRRI…LRQRPTCSSS (105 aa). A Phosphoserine modification is found at Ser289. Residues 292 to 302 are compositionally biased toward polar residues; the sequence is QPGQESTQQSD. The segment covering 322–332 has biased composition (basic and acidic residues); sequence EEEKPEKRPLN. Ser342 and Ser345 each carry phosphoserine. Residues 353–371 are compositionally biased toward low complexity; sequence TEANPPTSASASALAPETL.

Belongs to the seipin family. As to quaternary structure, undecamer (an oligomer having eleven subunits). Oligomerization is important for its function in lipid droplet formation. Interacts with LDAF1 to form an oligomeric complex. Interacts with RAB18. Interacts with ZFYVE1 in a RAB18-dependent manner. In terms of tissue distribution, expressed in the paraventricular nucleus of the hypothalamus (PVN) and brainstem dorsal vagal complex (DVC) in oxytocin and catecholaminergic neurons (at protein level). Highest expression detected in subcutaneous and epididymal white adipose tissue, brown adipose tissue and testis. Also expressed in brain, skeletal muscle and adrenal gland, with lower levels detected in liver, heart, kidney, spleen, lung and small intestine. In brain, detected in piriform cortex, olfactory tubercle, islands of Calleja, lateral septal nucleus, medial septal nucleus, nucleus of the vertical limb of the diagonal band, nucleus of the horizontal limb of the diagonal band, preoptic area, paraventricular thalamic nucleus, lateral globus pallidus, supraoptic nucleus, suprachiasmatic nucleus, subfornical organ, paraventricular nucleus of the hypothalamus, zona incerta, dorsomedial nucleus of the hypothalamus, ventromedial nucleus of the hypothalamus, arcuate nucleus of the hypothalamus, basomedial amygdaloid nucleus, medial amygdaloid nucleus, medial habenular, pyramidal cell layer of the hippocampus, granular layer of the dentate gyrus, posterior hypothalamus, supramammilliary nucleus, premammillary nucleus, nucleus of Darkschewitsch, Edinger-Westphal nucleus, ventral tegmental area, dorsal raphe nucleus, periaqueductal gray, median raphe nucleus, lateral parabrachial nucleus, dorsal tegmental nucleus, laterodorsal tegmental nucleus, locus coeruleus, Barrington's nucleus, medial vestibular nucleus, ambiguous nucleus, dorsal vagal complex and hypoglossal nucleus.

The protein localises to the endoplasmic reticulum membrane. The protein resides in the lipid droplet. In terms of biological role, plays a crucial role in the formation of lipid droplets (LDs) which are storage organelles at the center of lipid and energy homeostasis. In association with LDAF1, defines the sites of LD formation in the ER. Also required for growth and maturation of small nascent LDs into larger mature LDs. Mediates the formation and/or stabilization of endoplasmic reticulum-lipid droplets (ER-LD) contacts, facilitating protein and lipid delivery from the ER into growing LDs. Regulates the maturation of ZFYVE1-positive nascent LDs and the function of the RAB18-ZFYVE1 complex in mediating the formation of ER-LD contacts. Binds anionic phospholipids including phosphatidic acid. Plays an important role in the differentiation and development of adipocytes. This chain is Seipin, found in Mus musculus (Mouse).